Consider the following 204-residue polypeptide: Leucyl/phenylalanyl-tRNA--protein transferase (204 aa).

This sequence belongs to the L/F-transferase family.

It localises to the cytoplasm. It carries out the reaction N-terminal L-lysyl-[protein] + L-leucyl-tRNA(Leu) = N-terminal L-leucyl-L-lysyl-[protein] + tRNA(Leu) + H(+). It catalyses the reaction N-terminal L-arginyl-[protein] + L-leucyl-tRNA(Leu) = N-terminal L-leucyl-L-arginyl-[protein] + tRNA(Leu) + H(+). The catalysed reaction is L-phenylalanyl-tRNA(Phe) + an N-terminal L-alpha-aminoacyl-[protein] = an N-terminal L-phenylalanyl-L-alpha-aminoacyl-[protein] + tRNA(Phe). Functions in the N-end rule pathway of protein degradation where it conjugates Leu, Phe and, less efficiently, Met from aminoacyl-tRNAs to the N-termini of proteins containing an N-terminal arginine or lysine. The chain is Leucyl/phenylalanyl-tRNA--protein transferase from Rhizobium leguminosarum bv. trifolii (strain WSM2304).